Consider the following 878-residue polypeptide: Multiple C2 and transmembrane domain-containing protein 2 (878 aa).

2 disordered regions span residues 20–40 (LINL…DLRV) and 143–178 (KPSL…ESTL). Basic and acidic residues predominate over residues 149-161 (DAPEEHDKTHGND). C2 domains are found at residues 177-292 (TLGE…EHIL), 334-452 (SKSS…CLEL), and 486-607 (PSER…CYVL). 5 residues coordinate Ca(2+): Asp-210, Asp-216, Asp-263, Asp-265, and Asp-270. The Ca(2+) site is built by Asp-525, Asp-531, Asp-577, Asp-579, and Asp-585. The helical transmembrane segment at 694-714 (FVVFLVTVWNFELYMIPLALL) threads the bilayer. The tract at residues 728-752 (KASSTQDSQESTDVEEEGKEEEKES) is disordered. Residues 737–746 (ESTDVEEEGK) show a composition bias toward acidic residues. The chain crosses the membrane as a helical span at residues 794–814 (PFLSLLACLILAITTVILYFI).

The protein belongs to the MCTP family. It depends on Ca(2+) as a cofactor.

The protein resides in the membrane. In terms of biological role, might play a role in the development of cardiac outflow tract. The polypeptide is Multiple C2 and transmembrane domain-containing protein 2 (Mctp2) (Mus musculus (Mouse)).